The primary structure comprises 120 residues: Aspartate 1-decarboxylase (120 aa).

The active-site Schiff-base intermediate with substrate; via pyruvic acid is S25. At S25 the chain carries Pyruvic acid (Ser). Position 57 (T57) interacts with substrate. Catalysis depends on Y58, which acts as the Proton donor. 73–75 is a substrate binding site; that stretch reads GAA.

This sequence belongs to the PanD family. Heterooctamer of four alpha and four beta subunits. The cofactor is pyruvate. Is synthesized initially as an inactive proenzyme, which is activated by self-cleavage at a specific serine bond to produce a beta-subunit with a hydroxyl group at its C-terminus and an alpha-subunit with a pyruvoyl group at its N-terminus.

The protein localises to the cytoplasm. It carries out the reaction L-aspartate + H(+) = beta-alanine + CO2. Its pathway is cofactor biosynthesis; (R)-pantothenate biosynthesis; beta-alanine from L-aspartate: step 1/1. In terms of biological role, catalyzes the pyruvoyl-dependent decarboxylation of aspartate to produce beta-alanine. This Coprothermobacter proteolyticus (strain ATCC 35245 / DSM 5265 / OCM 4 / BT) protein is Aspartate 1-decarboxylase.